A 377-amino-acid chain; its full sequence is Chaperone protein DnaJ (377 aa).

Residues 5–70 (DYYQILGIPK…EKRSAYDQYG (66 aa)) enclose the J domain. Residues 132–210 (GIKKEIQIPT…CHGQGRVETY (79 aa)) form a CR-type zinc finger. 8 residues coordinate Zn(2+): cysteine 145, cysteine 148, cysteine 162, cysteine 165, cysteine 184, cysteine 187, cysteine 198, and cysteine 201. CXXCXGXG motif repeat units follow at residues 145-152 (CKTCYGSG), 162-169 (CSTCHGKG), 184-191 (CPTCHGKG), and 198-205 (CNLCHGQG).

The protein belongs to the DnaJ family. Homodimer. Requires Zn(2+) as cofactor.

It localises to the cytoplasm. Functionally, participates actively in the response to hyperosmotic and heat shock by preventing the aggregation of stress-denatured proteins and by disaggregating proteins, also in an autonomous, DnaK-independent fashion. Unfolded proteins bind initially to DnaJ; upon interaction with the DnaJ-bound protein, DnaK hydrolyzes its bound ATP, resulting in the formation of a stable complex. GrpE releases ADP from DnaK; ATP binding to DnaK triggers the release of the substrate protein, thus completing the reaction cycle. Several rounds of ATP-dependent interactions between DnaJ, DnaK and GrpE are required for fully efficient folding. Also involved, together with DnaK and GrpE, in the DNA replication of plasmids through activation of initiation proteins. This is Chaperone protein DnaJ from Buchnera aphidicola subsp. Acyrthosiphon pisum (strain 5A).